The following is a 316-amino-acid chain: Biotin synthase (316 aa).

Positions 38–266 (YKGKKIELCA…DKDIRVCGGR (229 aa)) constitute a Radical SAM core domain. Residues C56, C60, and C63 each contribute to the [4Fe-4S] cluster site. Residues S100, C131, C191, and R261 each coordinate [2Fe-2S] cluster.

The protein belongs to the radical SAM superfamily. Biotin synthase family. In terms of assembly, homodimer. [4Fe-4S] cluster serves as cofactor. [2Fe-2S] cluster is required as a cofactor.

It catalyses the reaction (4R,5S)-dethiobiotin + (sulfur carrier)-SH + 2 reduced [2Fe-2S]-[ferredoxin] + 2 S-adenosyl-L-methionine = (sulfur carrier)-H + biotin + 2 5'-deoxyadenosine + 2 L-methionine + 2 oxidized [2Fe-2S]-[ferredoxin]. Its pathway is cofactor biosynthesis; biotin biosynthesis; biotin from 7,8-diaminononanoate: step 2/2. Functionally, catalyzes the conversion of dethiobiotin (DTB) to biotin by the insertion of a sulfur atom into dethiobiotin via a radical-based mechanism. In Thermodesulfovibrio yellowstonii (strain ATCC 51303 / DSM 11347 / YP87), this protein is Biotin synthase.